Reading from the N-terminus, the 116-residue chain is Large ribosomal subunit protein uL18 (116 aa).

Belongs to the universal ribosomal protein uL18 family. As to quaternary structure, part of the 50S ribosomal subunit; part of the 5S rRNA/L5/L18/L25 subcomplex. Contacts the 5S and 23S rRNAs.

In terms of biological role, this is one of the proteins that bind and probably mediate the attachment of the 5S RNA into the large ribosomal subunit, where it forms part of the central protuberance. This chain is Large ribosomal subunit protein uL18, found in Shewanella sediminis (strain HAW-EB3).